Here is a 326-residue protein sequence, read N- to C-terminus: Putative replication protein B (326 aa).

Belongs to the ParB family.

The chain is Putative replication protein B from Sinorhizobium fredii (strain NBRC 101917 / NGR234).